A 323-amino-acid chain; its full sequence is tRNA N6-adenosine threonylcarbamoyltransferase (323 aa).

3 residues coordinate Fe cation: H105, H109, and Y126. Residues 126–130 (YVSGG), D158, G171, E175, and N255 each bind substrate. D283 contacts Fe cation.

The protein belongs to the KAE1 / TsaD family. In terms of assembly, monomer. Component of the KEOPS complex that consists of Kae1, Bud32, Cgi121 and Pcc1; the whole complex dimerizes. It depends on Fe(2+) as a cofactor.

The protein localises to the cytoplasm. It carries out the reaction L-threonylcarbamoyladenylate + adenosine(37) in tRNA = N(6)-L-threonylcarbamoyladenosine(37) in tRNA + AMP + H(+). Its function is as follows. Required for the formation of a threonylcarbamoyl group on adenosine at position 37 (t(6)A37) in tRNAs that read codons beginning with adenine. Is a component of the KEOPS complex that is probably involved in the transfer of the threonylcarbamoyl moiety of threonylcarbamoyl-AMP (TC-AMP) to the N6 group of A37. Kae1 likely plays a direct catalytic role in this reaction, but requires other protein(s) of the complex to fulfill this activity. The polypeptide is tRNA N6-adenosine threonylcarbamoyltransferase (Archaeoglobus fulgidus (strain ATCC 49558 / DSM 4304 / JCM 9628 / NBRC 100126 / VC-16)).